A 208-amino-acid polypeptide reads, in one-letter code: Peptide deformylase 3 (208 aa).

Positions 120 and 162 each coordinate Fe cation. Residue Glu-163 is part of the active site. His-166 is a binding site for Fe cation.

The protein belongs to the polypeptide deformylase family. Requires Fe(2+) as cofactor.

It carries out the reaction N-terminal N-formyl-L-methionyl-[peptide] + H2O = N-terminal L-methionyl-[peptide] + formate. In terms of biological role, removes the formyl group from the N-terminal Met of newly synthesized proteins. Requires at least a dipeptide for an efficient rate of reaction. N-terminal L-methionine is a prerequisite for activity but the enzyme has broad specificity at other positions. This Streptomyces coelicolor (strain ATCC BAA-471 / A3(2) / M145) protein is Peptide deformylase 3.